Reading from the N-terminus, the 518-residue chain is D-aminopeptidase (518 aa).

S62 acts as the Nucleophile in catalysis. K65 serves as the catalytic Proton donor/acceptor. Residues 477 to 487 (QRSMDAPSPGE) form an important for specificity region. A substrate-binding site is contributed by D481.

This sequence belongs to the peptidase S12 family. Homodimer.

The enzyme catalyses Release of an N-terminal D-amino acid from a peptide, Xaa-|-Yaa-, in which Xaa is preferably D-Ala, D-Ser or D-Thr. D-amino acid amides and methyl esters also are hydrolyzed, as is glycine amide.. With respect to regulation, inhibited by beta-lactam compounds such as 6-aminopenicillic acid, 7-aminocephalosporanic acid, benzylpenicillin and ampicillin. Inhibited by p-chloromercuribenzoate. In terms of biological role, hydrolyzes N-terminal residues in D-amino acid-containing peptides. The sequence is that of D-aminopeptidase from Brucella ovis (strain ATCC 25840 / 63/290 / NCTC 10512).